We begin with the raw amino-acid sequence, 86 residues long: Small ribosomal subunit protein bS20 (86 aa).

This sequence belongs to the bacterial ribosomal protein bS20 family.

Binds directly to 16S ribosomal RNA. This chain is Small ribosomal subunit protein bS20, found in Bifidobacterium longum (strain DJO10A).